Here is a 408-residue protein sequence, read N- to C-terminus: Probable cysteine desulfurase (408 aa).

The residue at position 225 (lysine 225) is an N6-(pyridoxal phosphate)lysine.

The protein belongs to the class-V pyridoxal-phosphate-dependent aminotransferase family. Csd subfamily. Requires pyridoxal 5'-phosphate as cofactor.

It carries out the reaction (sulfur carrier)-H + L-cysteine = (sulfur carrier)-SH + L-alanine. In terms of biological role, catalyzes the removal of elemental sulfur and selenium atoms from L-cysteine, L-cystine, L-selenocysteine, and L-selenocystine to produce L-alanine. In Mycoplasma pneumoniae (strain ATCC 29342 / M129 / Subtype 1) (Mycoplasmoides pneumoniae), this protein is Probable cysteine desulfurase (csd).